The chain runs to 385 residues: Chaperone protein DnaJ (385 aa).

Residues 5 to 70 (DFYEVLGVSR…QKKAAYDQYG (66 aa)) enclose the J domain. The CR-type zinc finger occupies 137-214 (GVSKEIEVPT…CHGQGRKQKT (78 aa)). Zn(2+) contacts are provided by Cys-150, Cys-153, Cys-167, Cys-170, Cys-189, Cys-192, Cys-202, and Cys-205. 4 CXXCXGXG motif repeats span residues 150-157 (CDTCDGSG), 167-174 (CGTCHGHG), 189-196 (CPTCHGKG), and 202-209 (CNECHGQG).

The protein belongs to the DnaJ family. Homodimer. The cofactor is Zn(2+).

It localises to the cytoplasm. Participates actively in the response to hyperosmotic and heat shock by preventing the aggregation of stress-denatured proteins and by disaggregating proteins, also in an autonomous, DnaK-independent fashion. Unfolded proteins bind initially to DnaJ; upon interaction with the DnaJ-bound protein, DnaK hydrolyzes its bound ATP, resulting in the formation of a stable complex. GrpE releases ADP from DnaK; ATP binding to DnaK triggers the release of the substrate protein, thus completing the reaction cycle. Several rounds of ATP-dependent interactions between DnaJ, DnaK and GrpE are required for fully efficient folding. Also involved, together with DnaK and GrpE, in the DNA replication of plasmids through activation of initiation proteins. The chain is Chaperone protein DnaJ from Vibrio harveyi (Beneckea harveyi).